Consider the following 264-residue polypeptide: NAD-capped RNA hydrolase NudC (264 aa).

Residues Cys-99 and Cys-102 each coordinate Zn(2+). Glu-112 contacts substrate. Zn(2+)-binding residues include Cys-117 and Cys-120. Tyr-125 provides a ligand contact to substrate. A Nudix hydrolase domain is found at 126-253 (PVICPSIIVA…TIARKLIHVT (128 aa)). A divalent metal cation is bound by residues Ala-162, Glu-178, and Glu-182. A Nudix box motif is present at residues 163–184 (GFVEVGETFEQAVQREVFEETG). Substrate is bound at residue 196–203 (QPWAFPNS). Position 223 (Glu-223) interacts with a divalent metal cation. Ala-246 is a binding site for substrate.

The protein belongs to the Nudix hydrolase family. NudC subfamily. In terms of assembly, homodimer. The cofactor is Mg(2+). Mn(2+) is required as a cofactor. It depends on Zn(2+) as a cofactor.

It carries out the reaction a 5'-end NAD(+)-phospho-ribonucleoside in mRNA + H2O = a 5'-end phospho-adenosine-phospho-ribonucleoside in mRNA + beta-nicotinamide D-ribonucleotide + 2 H(+). It catalyses the reaction NAD(+) + H2O = beta-nicotinamide D-ribonucleotide + AMP + 2 H(+). The enzyme catalyses NADH + H2O = reduced beta-nicotinamide D-ribonucleotide + AMP + 2 H(+). In terms of biological role, mRNA decapping enzyme that specifically removes the nicotinamide adenine dinucleotide (NAD) cap from a subset of mRNAs by hydrolyzing the diphosphate linkage to produce nicotinamide mononucleotide (NMN) and 5' monophosphate mRNA. The NAD-cap is present at the 5'-end of some mRNAs and stabilizes RNA against 5'-processing. Has preference for mRNAs with a 5'-end purine. Catalyzes the hydrolysis of a broad range of dinucleotide pyrophosphates. The protein is NAD-capped RNA hydrolase NudC of Haemophilus influenzae (strain ATCC 51907 / DSM 11121 / KW20 / Rd).